A 125-amino-acid chain; its full sequence is Glycine cleavage system H protein (125 aa).

The Lipoyl-binding domain maps to Ser-22 to Thr-104. Position 63 is an N6-lipoyllysine (Lys-63).

The protein belongs to the GcvH family. The glycine cleavage system is composed of four proteins: P, T, L and H. (R)-lipoate is required as a cofactor.

Functionally, the glycine cleavage system catalyzes the degradation of glycine. The H protein shuttles the methylamine group of glycine from the P protein to the T protein. Is also involved in protein lipoylation via its role as an octanoyl/lipoyl carrier protein intermediate. The chain is Glycine cleavage system H protein from Listeria welshimeri serovar 6b (strain ATCC 35897 / DSM 20650 / CCUG 15529 / CIP 8149 / NCTC 11857 / SLCC 5334 / V8).